A 307-amino-acid polypeptide reads, in one-letter code: Mitochondrial brown fat uncoupling protein 1 (307 aa).

The Mitochondrial intermembrane portion of the chain corresponds to valine 2–histidine 10. Residues proline 11–phenylalanine 32 traverse the membrane as a helical segment. 3 Solcar repeats span residues proline 11 to tyrosine 102, proline 111 to alanine 201, and aspartate 210 to glutamate 295. Over proline 33–lysine 73 the chain is Mitochondrial matrix. Lysine 56 provides a ligand contact to fatty acid 16:0. A helical membrane pass occupies residues leucine 74–tyrosine 96. The Mitochondrial intermembrane segment spans residues aspartate 97–arginine 116. Residues isoleucine 117–proline 133 form a helical membrane-spanning segment. Over threonine 134–threonine 178 the chain is Mitochondrial matrix. Residues proline 179–tyrosine 195 form a helical membrane-spanning segment. Topologically, residues aspartate 196–valine 212 are mitochondrial intermembrane. Residues proline 213–proline 232 traverse the membrane as a helical segment. At alanine 233–alanine 266 the chain is on the mitochondrial matrix side. Residue cysteine 254 is modified to Cysteine sulfenic acid (-SOH). Residues phenylalanine 267–phenylalanine 289 form a helical membrane-spanning segment. Residue lysine 269 participates in fatty acid 16:0 binding. The Mitochondrial intermembrane portion of the chain corresponds to glutamate 290–threonine 307.

It belongs to the mitochondrial carrier (TC 2.A.29) family. As to quaternary structure, most probably functions as a monomer. Binds one purine nucleotide per monomer. However, has also been suggested to function as a homodimer or a homotetramer. Tightly associates with cardiolipin in the mitochondrion inner membrane; may stabilize and regulate its activity. In terms of processing, may undergo sulfenylation upon cold exposure. May increase the sensitivity of UCP1 thermogenic function to the activation by noradrenaline probably through structural effects. Post-translationally, may undergo ubiquitin-mediated proteasomal degradation. Brown adipose tissue.

Its subcellular location is the mitochondrion inner membrane. It carries out the reaction H(+)(in) = H(+)(out). With respect to regulation, has no constitutive proton transporter activity and has to be activated by long-chain fatty acids/LCFAs. Inhibited by purine nucleotides. Both purine nucleotides and LCFAs bind the cytosolic side of the transporter and directly compete to activate or inhibit it. Activated by noradrenaline and reactive oxygen species. Despite lacking canonical translational encoding for selenocysteine, a small pool of the protein has been observed to selectively incorporate selenocysteine at 'Cys-254'. Selenocysteine-modified protein is highly sensitive to redox modification and may constitute a pool of protein highly sensitive to activation by elevated levels of reactive oxygen species (ROS). In terms of biological role, mitochondrial protein responsible for thermogenic respiration, a specialized capacity of brown adipose tissue and beige fat that participates in non-shivering adaptive thermogenesis to temperature and diet variations and more generally to the regulation of energy balance. Functions as a long-chain fatty acid/LCFA and proton symporter, simultaneously transporting one LCFA and one proton through the inner mitochondrial membrane. However, LCFAs remaining associated with the transporter via their hydrophobic tails, it results in an apparent transport of protons activated by LCFAs. Thereby, dissipates the mitochondrial proton gradient and converts the energy of substrate oxydation into heat instead of ATP. Regulates the production of reactive oxygen species/ROS by mitochondria. The polypeptide is Mitochondrial brown fat uncoupling protein 1 (Mesocricetus auratus (Golden hamster)).